A 352-amino-acid chain; its full sequence is Ion-translocating oxidoreductase complex subunit D (352 aa).

4 helical membrane-spanning segments follow: residues 20-40, 42-62, 89-109, and 123-143; these read IMLLVLLAAVPGIAAQLWFFG, GTLVQILLASVSTLLAEALVL, IPPLAPWWMVVLGTVFAVIIA, and PAMIGYVVLLISFPVQMTSWL. T187 carries the post-translational modification FMN phosphoryl threonine. The next 5 membrane-spanning stretches (helical) occupy residues 214–234, 242–262, 267–287, 301–321, and 322–342; these read ILAGAGWQWVNLAWLAGGLWL, WHIPLSFLVTLALCATLGWLF, LAAPQIHLLSGATMLGAFFIL, LIFGALAGLLVWLIRSFGGYP, and DGVAFAVLLANITVPLIDYYT.

Belongs to the NqrB/RnfD family. As to quaternary structure, the complex is composed of six subunits: RsxA, RsxB, RsxC, RsxD, RsxE and RsxG. The cofactor is FMN.

The protein resides in the cell inner membrane. In terms of biological role, part of a membrane-bound complex that couples electron transfer with translocation of ions across the membrane. Required to maintain the reduced state of SoxR. This Shigella boydii serotype 18 (strain CDC 3083-94 / BS512) protein is Ion-translocating oxidoreductase complex subunit D.